Here is a 21-residue protein sequence, read N- to C-terminus: Nucleoside diphosphate kinase (21 aa).

Residue His-4 is the Pros-phosphohistidine intermediate of the active site.

This sequence belongs to the NDK family. Homohexamer. Requires Mg(2+) as cofactor.

Its subcellular location is the cytoplasm. It catalyses the reaction a 2'-deoxyribonucleoside 5'-diphosphate + ATP = a 2'-deoxyribonucleoside 5'-triphosphate + ADP. It carries out the reaction a ribonucleoside 5'-diphosphate + ATP = a ribonucleoside 5'-triphosphate + ADP. In terms of biological role, major role in the synthesis of nucleoside triphosphates other than ATP. The ATP gamma phosphate is transferred to the NDP beta phosphate via a ping-pong mechanism, using a phosphorylated active-site intermediate. This Candida albicans (Yeast) protein is Nucleoside diphosphate kinase (NDK1).